The sequence spans 189 residues: Protein Rex (189 aa).

Basic residues predominate over residues 1 to 16 (MPKTRRRPRRSQRKRP). A disordered region spans residues 1–28 (MPKTRRRPRRSQRKRPPTPWPTSQGLDR). The short motif at 2–18 (PKTRRRPRRSQRKRPPT) is the Nuclear localization signal, and RNA-binding (RxRE) element. The interval 56 to 70 (RPVYIVTPYWPPVQS) is homomultimerization. Residue Ser-70 is modified to Phosphoserine; by host. A Nuclear export signal motif is present at residues 82–93 (LSAQLYSSLSLD). Low complexity predominate over residues 84–94 (AQLYSSLSLDS). The tract at residues 84–189 (AQLYSSLSLD…PPSPGPSCPT (106 aa)) is disordered. Residues 111 to 125 (RRPPIQPPTFHPPSS) show a composition bias toward pro residues. Positions 123–131 (PSSRPCANT) are homomultimerization. Residues 127-164 (PCANTPPSETDTWNPPLGSTSQPCLFQTPASGPKTCTP) are compositionally biased toward polar residues. Phosphothreonine; by host is present on Thr-174. A Phosphoserine; by host modification is found at Ser-177. Over residues 178–189 (FPPPSPGPSCPT) the composition is skewed to pro residues.

It belongs to the deltaretrovirus Rex protein family. As to quaternary structure, homomultimer. Multimeric assembly is essential for activity and involves XPO1. Binds to human XPO1 and KPNB1. Interacts (via N-terminal nuclear localization signal) with human NPM1. Phosphorylated.

Its subcellular location is the host nucleus. The protein resides in the host nucleolus. The protein localises to the host cytoplasm. In terms of biological role, rex escorts unspliced gag-pro-pol and singly spliced env mRNAs out of the nucleus of infected cells. These mRNAs carry a recognition sequence called Rex responsive element (RxRE or XRE) located at the 3' region of the long terminal repeat (LTR). This function is essential since most HTLV proteins are translated from unspliced or partially spliced pre-mRNAs that cannot exit the nucleus by the pathway used by fully processed cellular mRNAs. Rex itself is translated from a fully spliced mRNA that probably readily exits the nucleus. Rex's nuclear localization signal (NLS) binds directly to KPNB1/importin beta-1 without previous binding to KPNA1/importin alpha-1. KPNB1 binds to the GDP bound form of RAN (Ran-GDP) and targets Rex to the nucleus. In the nucleus, the conversion from Ran-GDP to Ran-GTP dissociates Rex from KPNB1 and allows Rex's binding to the RRE in viral pre-mRNAs. Rex multimerizes on the RRE via cooperative assembly. This multimerization is critical for its full biological activity, since it may shield the viral RNA from being spliced or down-regulated, and probably exposes Rex's nuclear export signal (NES) to the surface. Rex can then form a complex with XPO1/CRM1, RANBP3 and Ran-GTP, leading to nuclear export of the complex. Conversion from Ran-GTP to Ran-GDP mediates dissociation of the Rex/RRE/XPO1/RANBP3/RAN complex, so that Rex can return to the nucleus for a subsequent round of export. This is Protein Rex from Homo sapiens (Human).